The sequence spans 272 residues: Pyrroline-5-carboxylate reductase 3 (272 aa).

Belongs to the pyrroline-5-carboxylate reductase family.

The protein localises to the cytoplasm. It carries out the reaction L-proline + NADP(+) = (S)-1-pyrroline-5-carboxylate + NADPH + 2 H(+). The catalysed reaction is L-proline + NAD(+) = (S)-1-pyrroline-5-carboxylate + NADH + 2 H(+). The protein operates within amino-acid biosynthesis; L-proline biosynthesis; L-proline from L-glutamate 5-semialdehyde: step 1/1. In terms of biological role, catalyzes the reduction of 1-pyrroline-5-carboxylate (PCA) to L-proline. The polypeptide is Pyrroline-5-carboxylate reductase 3 (proG) (Bacillus subtilis (strain 168)).